The primary structure comprises 239 residues: Serine protease SplD (239 aa).

The signal sequence occupies residues 1 to 36; it reads MNKNIIIKSIAALTILTSITGVGTTVVDGIQQTAKA. Residues His-75, Asp-114, and Ser-192 each act as charge relay system in the active site.

The protein belongs to the peptidase S1B family.

The protein localises to the secreted. This is Serine protease SplD (splD) from Staphylococcus aureus (strain Mu3 / ATCC 700698).